An 811-amino-acid polypeptide reads, in one-letter code: Hypoxia-inducible factor 1-alpha (811 aa).

Positions 1–27 (MDSPGGVTDKKRISSERRKEKSRDAAR) are disordered. The segment covering 8 to 27 (TDKKRISSERRKEKSRDAAR) has biased composition (basic and acidic residues). In terms of domain architecture, bHLH spans 17–70 (RRKEKSRDAARCRRSKESEVFYELAHQLPLPHTVSAHLDKASIMRLTISYLRMR). PAS domains follow at residues 80–157 (TEAN…PVKK) and 228–298 (PHPS…FTKG). A PAC domain is found at 302–345 (TGQYRMLAKQGGYVWVETQATVIYNTKNSQPQCIVCVNYVLSGI). The interval 401–587 (APAAGDTIIS…LSPLESSSSG (187 aa)) is ODD. 4-hydroxyproline is present on Pro402. The tract at residues 490 to 518 (PQVQEQPTSPSDASTSQSSPEPSSPNDYC) is disordered. The segment covering 496–514 (PTSPSDASTSQSSPEPSSP) has biased composition (low complexity). The NTAD stretch occupies residues 529–573 (FKLELVEKLFAIDTEAKNPFSTQETDLDLEMLAPYIPMDDDFQLR). At Pro562 the chain carries 4-hydroxyproline. Positions 576–785 (DQLSPLESSS…GLPQLTSYDC (210 aa)) are ID. Over residues 634 to 652 (NDTSSAPASPYSGNRSRTA) the composition is skewed to polar residues. Positions 634-655 (NDTSSAPASPYSGNRSRTASPI) are disordered. 2 short sequence motifs (nuclear localization signal) span residues 703 to 706 (RKRK) and 718 to 721 (GIGS). The CTAD stretch occupies residues 771–811 (SMDESGLPQLTSYDCEVNAPIQGNRNLLQGEELLRALDQVN). Asn788 carries the (3S)-3-hydroxyasparagine modification.

In terms of assembly, efficient DNA binding requires heterodimerization of an alpha and a beta/ARNT subunit. In terms of processing, in normoxia, is hydroxylated on Pro-402 and Pro-562. The hydroxylated prolines promote interaction with VHL, initiating rapid ubiquitination and subsequent proteasomal degradation. Under hypoxia, proline hydroxylation is impaired and ubiquitination is attenuated, resulting in stabilization. Post-translationally, in normoxia, is hydroxylated on Asn-788, thus abrogating interaction with CREBBP and EP300 and preventing transcriptional activation. The iron and 2-oxoglutarate dependent 3-hydroxylation of asparagine is (S) stereospecific within HIF CTAD domains.

Its subcellular location is the cytoplasm. It localises to the nucleus. It is found in the nucleus speckle. With respect to regulation, induced by reactive oxygen species (ROS). Its function is as follows. Functions as a master transcriptional regulator of the adaptive response to hypoxia. Under hypoxic conditions, activates the transcription of over 40 genes, including erythropoietin, glucose transporters, glycolytic enzymes, vascular endothelial growth factor, HILPDA, and other genes whose protein products increase oxygen delivery or facilitate metabolic adaptation to hypoxia. Plays an essential role in embryonic vascularization, tumor angiogenesis and pathophysiology of ischemic disease. The protein is Hypoxia-inducible factor 1-alpha (HIF1A) of Gallus gallus (Chicken).